Reading from the N-terminus, the 163-residue chain is uncharacterized protein (163 aa).

The span at 1-10 shows a compositional bias: basic and acidic residues; it reads MTHPLPHDSH. Disordered stretches follow at residues 1 to 21 and 71 to 112; these read MTHPLPHDSHTSGAPPLVNKS and SKQP…EQRR. Over residues 90–105 the composition is skewed to polar residues; that stretch reads PASSLQDHSRLTSLSR.

This is an uncharacterized protein from Homo sapiens (Human).